Here is a 572-residue protein sequence, read N- to C-terminus: Proline--tRNA ligase (572 aa).

The protein belongs to the class-II aminoacyl-tRNA synthetase family. ProS type 1 subfamily. In terms of assembly, homodimer.

It localises to the cytoplasm. It catalyses the reaction tRNA(Pro) + L-proline + ATP = L-prolyl-tRNA(Pro) + AMP + diphosphate. In terms of biological role, catalyzes the attachment of proline to tRNA(Pro) in a two-step reaction: proline is first activated by ATP to form Pro-AMP and then transferred to the acceptor end of tRNA(Pro). As ProRS can inadvertently accommodate and process non-cognate amino acids such as alanine and cysteine, to avoid such errors it has two additional distinct editing activities against alanine. One activity is designated as 'pretransfer' editing and involves the tRNA(Pro)-independent hydrolysis of activated Ala-AMP. The other activity is designated 'posttransfer' editing and involves deacylation of mischarged Ala-tRNA(Pro). The misacylated Cys-tRNA(Pro) is not edited by ProRS. This Shewanella amazonensis (strain ATCC BAA-1098 / SB2B) protein is Proline--tRNA ligase.